The sequence spans 571 residues: Coenzyme A biosynthesis protein 3 (571 aa).

2 disordered regions span residues 1-72 and 100-120; these read MTDE…YKND and INTSMPANTNGQQKRFSPSLP. The span at 8-35 shows a compositional bias: polar residues; sequence SDQNMNGKQGVNLISSLPTTQVPVSILT. Position 42 is a phosphoserine (Ser42). The segment covering 43 to 59 has biased composition (basic and acidic residues); that stretch reads IHDESNFERSDSHEDQS. Residues 60 to 72 are compositionally biased toward polar residues; the sequence is KSNSNRRNIYKND. Phosphoserine is present on residues Ser116, Ser121, and Ser124. Disordered stretches follow at residues 140–171 and 209–244; these read ISNKPGKQQQQQEQLQQNQQQEEQQKAQLQEQ and IFKENTTNDGTDIRKHSVSSGTSNSEDEVDSPSMEK. Over residues 146–171 the composition is skewed to low complexity; sequence KQQQQQEQLQQNQQQEEQQKAQLQEQ. Position 264 is a phosphoserine (Ser264). Positions 507–571 are disordered; the sequence is RDEETGDKEQ…EDEEDVKTEV (65 aa). Positions 516 to 571 are enriched in acidic residues; sequence QEQEEQEGADNEDDDDEDDEEDEEDEEEEEALNETASDESNDEEDEEDEEDVKTEV.

The protein belongs to the HFCD (homooligomeric flavin containing Cys decarboxylase) superfamily. Component of the phosphopantothenoylcysteine decarboxylase (PPCDC) complex, a heterotrimer composed of CAB3, HAL3 and VHS3.

It is found in the cytoplasm. Its function is as follows. Component of the phosphopantothenoylcysteine decarboxylase (PPCDC) involved in the coenzyme A synthesis. This chain is Coenzyme A biosynthesis protein 3 (CAB3), found in Saccharomyces cerevisiae (strain ATCC 204508 / S288c) (Baker's yeast).